We begin with the raw amino-acid sequence, 521 residues long: GMP synthase [glutamine-hydrolyzing] (521 aa).

The region spanning 5-197 is the Glutamine amidotransferase type-1 domain; it reads KILILDFGSQ…VLDICGAQPG (193 aa). Cys-81 acts as the Nucleophile in catalysis. Catalysis depends on residues His-171 and Glu-173. Positions 198-390 constitute a GMPS ATP-PPase domain; that stretch reads WTMPNYIEEA…LGLPREMVYR (193 aa). 225–231 provides a ligand contact to ATP; sequence SGGVDSS.

As to quaternary structure, homodimer.

The catalysed reaction is XMP + L-glutamine + ATP + H2O = GMP + L-glutamate + AMP + diphosphate + 2 H(+). Its pathway is purine metabolism; GMP biosynthesis; GMP from XMP (L-Gln route): step 1/1. In terms of biological role, catalyzes the synthesis of GMP from XMP. In Neisseria meningitidis serogroup A / serotype 4A (strain DSM 15465 / Z2491), this protein is GMP synthase [glutamine-hydrolyzing] (guaA).